We begin with the raw amino-acid sequence, 103 residues long: MASGGGFEDLAREAAKYFGVWIVLVASAVAEVYLVLEGIARNPFVFVLAVALFQSSLIALFFQHLRDEPIIIRGITVSGAVLIAILIISAVTSVLTCTPYFPG.

The next 3 helical transmembrane spans lie at Val20 to Ala40, Asn42 to Phe62, and Ile75 to Leu95.

It is found in the cell membrane. The sequence is that of Heme-copper oxidase subunit 4 (aoxC) from Aeropyrum pernix (strain ATCC 700893 / DSM 11879 / JCM 9820 / NBRC 100138 / K1).